A 630-amino-acid polypeptide reads, in one-letter code: Forkhead box protein O (630 aa).

Residues 1–45 (MDGFVQEWSNLPRSDNGLHMDQLVGELPTDGGFEPQTRARSNTWP) are disordered. At threonine 43 the chain carries Phosphothreonine; by PKB/AKT1. A DNA-binding region (fork-head) is located at residues 92 to 198 (WGNLSYADLI…ETSRYEKRRG (107 aa)). At serine 187 the chain carries Phosphoserine; by PKB/AKT1. The segment at 214-260 (GLNDATPSPSSSVSEGLDHFPESPLHSGGFQLSPDFRQRASSNASSC) is disordered. Over residues 218–227 (ATPSPSSSVS) the composition is skewed to polar residues. The residue at position 255 (serine 255) is a Phosphoserine; by PKB/AKT1. A phosphoserine mark is found at serine 258, serine 259, and serine 264. Disordered regions lie at residues 318–379 (SAAS…QQQQ) and 403–432 (TRDGLSPNSVTTTMSPAYPNSEPSSDSLNT). Low complexity-rich tracts occupy residues 332–350 (QQQQQQQQQQAQQQSQLPQ) and 367–379 (QPQAQQQQQQQQQ). Composition is skewed to polar residues over residues 408-417 (SPNSVTTTMS) and 423-432 (SEPSSDSLNT).

As to quaternary structure, interacts with melt.

The protein resides in the cytoplasm. The protein localises to the nucleus. Functionally, transcription factor involved in the regulation of the insulin signaling pathway. Consistently activates both the downstream target Thor\d4EBP and the feedback control target InR. Involved in negative regulation of the cell cycle, modulating cell growth and proliferation. In response to cellular stresses, such as nutrient deprivation or increased levels of reactive oxygen species, foxo is activated and inhibits growth through the action of target genes such as Thor. Foxo activated in the adult fat body can regulate lifespan in adults; an insulin peptide itself may function as one secondary messenger of insulin-regulated aging. Also regulates Lip4, homolog of human acid lipases, thereby acting as a key modulator of lipid metabolism by insulin signaling and integrates insulin responses to glucose and lipid homeostasis. This Drosophila grimshawi (Hawaiian fruit fly) protein is Forkhead box protein O.